The sequence spans 293 residues: Probable aspartoacylase (293 aa).

Zn(2+)-binding residues include His-14 and Glu-17. Residues Arg-56 and 63–64 (NR) each bind substrate. His-106 lines the Zn(2+) pocket. Substrate-binding residues include Glu-165 and Tyr-276.

This sequence belongs to the AspA/AstE family. Aspartoacylase subfamily. Zn(2+) is required as a cofactor.

It catalyses the reaction an N-acyl-L-aspartate + H2O = a carboxylate + L-aspartate. This chain is Probable aspartoacylase, found in Trichodesmium erythraeum (strain IMS101).